The following is a 295-amino-acid chain: tRNA-cytidine(32) 2-sulfurtransferase (295 aa).

Positions 59–64 match the PP-loop motif motif; it reads SGGKDS. The [4Fe-4S] cluster site is built by Cys-134, Cys-137, and Cys-225.

Belongs to the TtcA family. In terms of assembly, homodimer. Mg(2+) is required as a cofactor. The cofactor is [4Fe-4S] cluster.

Its subcellular location is the cytoplasm. The enzyme catalyses cytidine(32) in tRNA + S-sulfanyl-L-cysteinyl-[cysteine desulfurase] + AH2 + ATP = 2-thiocytidine(32) in tRNA + L-cysteinyl-[cysteine desulfurase] + A + AMP + diphosphate + H(+). The protein operates within tRNA modification. Catalyzes the ATP-dependent 2-thiolation of cytidine in position 32 of tRNA, to form 2-thiocytidine (s(2)C32). The sulfur atoms are provided by the cysteine/cysteine desulfurase (IscS) system. The sequence is that of tRNA-cytidine(32) 2-sulfurtransferase from Ruegeria sp. (strain TM1040) (Silicibacter sp.).